A 185-amino-acid polypeptide reads, in one-letter code: Ribosome-recycling factor (185 aa).

The protein belongs to the RRF family.

It localises to the cytoplasm. In terms of biological role, responsible for the release of ribosomes from messenger RNA at the termination of protein biosynthesis. May increase the efficiency of translation by recycling ribosomes from one round of translation to another. The polypeptide is Ribosome-recycling factor (Nitrosospira multiformis (strain ATCC 25196 / NCIMB 11849 / C 71)).